We begin with the raw amino-acid sequence, 367 residues long: Ribosomal lysine N-methyltransferase 5 (367 aa).

Residues Trp-110, 170–172 (GAG), Asp-192, Trp-256, and Met-288 each bind S-adenosyl-L-methionine.

This sequence belongs to the class I-like SAM-binding methyltransferase superfamily. RKM5 family.

Functionally, S-adenosyl-L-methionine-dependent protein-lysine N-methyltransferase that monomethylates 60S ribosomal protein L1 (RPL1A and RPL1B) at 'Lys-46'. The chain is Ribosomal lysine N-methyltransferase 5 (RKM5) from Saccharomyces cerevisiae (strain JAY291) (Baker's yeast).